The chain runs to 166 residues: Large ribosomal subunit protein uL10 (166 aa).

This sequence belongs to the universal ribosomal protein uL10 family. In terms of assembly, part of the ribosomal stalk of the 50S ribosomal subunit. The N-terminus interacts with L11 and the large rRNA to form the base of the stalk. The C-terminus forms an elongated spine to which L12 dimers bind in a sequential fashion forming a multimeric L10(L12)X complex.

In terms of biological role, forms part of the ribosomal stalk, playing a central role in the interaction of the ribosome with GTP-bound translation factors. The polypeptide is Large ribosomal subunit protein uL10 (Bacillus licheniformis (strain ATCC 14580 / DSM 13 / JCM 2505 / CCUG 7422 / NBRC 12200 / NCIMB 9375 / NCTC 10341 / NRRL NRS-1264 / Gibson 46)).